Consider the following 307-residue polypeptide: Methionyl-tRNA formyltransferase (307 aa).

108-111 (SLLP) contributes to the (6S)-5,6,7,8-tetrahydrofolate binding site.

The protein belongs to the Fmt family.

The enzyme catalyses L-methionyl-tRNA(fMet) + (6R)-10-formyltetrahydrofolate = N-formyl-L-methionyl-tRNA(fMet) + (6S)-5,6,7,8-tetrahydrofolate + H(+). Its function is as follows. Attaches a formyl group to the free amino group of methionyl-tRNA(fMet). The formyl group appears to play a dual role in the initiator identity of N-formylmethionyl-tRNA by promoting its recognition by IF2 and preventing the misappropriation of this tRNA by the elongation apparatus. The polypeptide is Methionyl-tRNA formyltransferase (Xylella fastidiosa (strain M12)).